A 67-amino-acid chain; its full sequence is Probable Sec-independent protein translocase protein TatE (67 aa).

Residues 1-21 (MGEISITKLLVVAALVVLLFG) traverse the membrane as a helical segment. Positions 45–67 (DEDAGAKKDANGDLPAEKLTHKE) are disordered.

Belongs to the TatA/E family. TatE subfamily.

It is found in the cell inner membrane. Functionally, part of the twin-arginine translocation (Tat) system that transports large folded proteins containing a characteristic twin-arginine motif in their signal peptide across membranes. TatE shares overlapping functions with TatA. This Escherichia fergusonii (strain ATCC 35469 / DSM 13698 / CCUG 18766 / IAM 14443 / JCM 21226 / LMG 7866 / NBRC 102419 / NCTC 12128 / CDC 0568-73) protein is Probable Sec-independent protein translocase protein TatE.